The following is a 148-amino-acid chain: Urease accessory protein UreE (148 aa).

Belongs to the UreE family.

Its subcellular location is the cytoplasm. Involved in urease metallocenter assembly. Binds nickel. Probably functions as a nickel donor during metallocenter assembly. This Lysinibacillus sphaericus (strain C3-41) protein is Urease accessory protein UreE.